A 311-amino-acid polypeptide reads, in one-letter code: Ribose-phosphate pyrophosphokinase (311 aa).

Residues 37–39 and 96–97 each bind ATP; these read DGE and RQ. Mg(2+) is bound by residues H130 and D170. K193 is an active-site residue. D-ribose 5-phosphate-binding positions include R195, D219, and 223–227; that span reads DTAGT.

The protein belongs to the ribose-phosphate pyrophosphokinase family. Class I subfamily. Homohexamer. The cofactor is Mg(2+).

It is found in the cytoplasm. It carries out the reaction D-ribose 5-phosphate + ATP = 5-phospho-alpha-D-ribose 1-diphosphate + AMP + H(+). It functions in the pathway metabolic intermediate biosynthesis; 5-phospho-alpha-D-ribose 1-diphosphate biosynthesis; 5-phospho-alpha-D-ribose 1-diphosphate from D-ribose 5-phosphate (route I): step 1/1. In terms of biological role, involved in the biosynthesis of the central metabolite phospho-alpha-D-ribosyl-1-pyrophosphate (PRPP) via the transfer of pyrophosphoryl group from ATP to 1-hydroxyl of ribose-5-phosphate (Rib-5-P). This chain is Ribose-phosphate pyrophosphokinase, found in Aquifex aeolicus (strain VF5).